Reading from the N-terminus, the 443-residue chain is Lysine-specific demethylase 8 (443 aa).

The segment covering 139 to 165 (TKLEAERGVREPGLESSKLHSPGEHSN) has biased composition (basic and acidic residues). Positions 139–174 (TKLEAERGVREPGLESSKLHSPGEHSNKKSFASVTG) are disordered. The 146-residue stretch at 298–443 (GYLAQHQLFE…LSFSVSFWWS (146 aa)) folds into the JmjC domain. Fe cation is bound by residues H348, D350, and H427.

Fe(2+) serves as cofactor.

It is found in the nucleus. The catalysed reaction is N(6),N(6)-dimethyl-L-lysyl(36)-[histone H3] + 2 2-oxoglutarate + 2 O2 = L-lysyl(36)-[histone H3] + 2 formaldehyde + 2 succinate + 2 CO2. In terms of biological role, histone demethylase required for G2/M phase cell cycle progression. Specifically demethylates dimethylated 'Lys-36' (H3K36me2) of histone H3, an epigenetic repressive mark, thereby acting as a transcription activator. May play a role in the regulation of the circadian clock. In Xenopus tropicalis (Western clawed frog), this protein is Lysine-specific demethylase 8 (kdm8).